A 136-amino-acid chain; its full sequence is Histone H3.3C (136 aa).

Residues 1 to 42 (MARTKQTARKSTGGKAPRKQLVTKAAKKCAPATGGVKKPHRY) form a disordered region. R3 is subject to Asymmetric dimethylarginine; by PRMT6. T4 bears the Phosphothreonine; by HASPIN mark. K5 is modified (allysine; alternate). K5 carries the post-translational modification N6,N6,N6-trimethyllysine; alternate. K5 carries the N6,N6-dimethyllysine; alternate modification. N6-(2-hydroxyisobutyryl)lysine; alternate is present on K5. K5 is subject to N6-acetyllysine; alternate. Residue K5 is modified to N6-methyllysine; alternate. 5-glutamyl dopamine; alternate is present on Q6. At Q6 the chain carries 5-glutamyl serotonin; alternate. The residue at position 7 (T7) is a Phosphothreonine; by PKC. K10 carries the N6-(2-hydroxyisobutyryl)lysine; alternate modification. K10 is modified (N6-lactoyllysine; alternate). The residue at position 10 (K10) is an N6-methylated lysine. An ADP-ribosylserine; alternate modification is found at S11. Phosphoserine; alternate; by AURKB, AURKC, RPS6KA3, RPS6KA4 and RPS6KA5 is present on S11. Position 12 is a phosphothreonine; by PKC (T12). K15 is subject to N6-(2-hydroxyisobutyryl)lysine; alternate. Residue K15 is modified to N6-lactoyllysine; alternate. The residue at position 15 (K15) is an N6-acetyllysine. At K15 the chain carries N6-glutaryllysine; alternate. R18 is subject to Asymmetric dimethylarginine. N6-(2-hydroxyisobutyryl)lysine; alternate is present on residues K19, K24, K28, and K37. The residue at position 19 (K19) is an N6-acetyllysine; alternate. Residues K19, K24, and K28 each carry the N6-lactoyllysine; alternate modification. Residues K19, K24, and K28 each carry the N6-glutaryllysine; alternate modification. 2 positions are modified to N6-butyryllysine; alternate: K19 and K24. Residue K19 is modified to N6-methylated lysine; alternate. K24 is subject to N6-acetyllysine. N6-acetyllysine; alternate is present on residues K28 and K37. N6-methylated lysine; alternate occurs at positions 28 and 37. Y42 bears the Phosphotyrosine mark. An N6-(2-hydroxyisobutyryl)lysine; alternate modification is found at K57. K57 bears the N6-lactoyllysine; alternate mark. The residue at position 57 (K57) is an N6-glutaryllysine; alternate. K57 carries the post-translational modification N6-succinyllysine; alternate. At S58 the chain carries Phosphoserine. An N6-(2-hydroxyisobutyryl)lysine; alternate mark is found at K65 and K80. 2 positions are modified to N6-methylated lysine: K65 and K80. K80 is modified (N6-lactoyllysine; alternate). K80 is subject to N6-glutaryllysine; alternate. K80 bears the N6-succinyllysine; alternate mark. T81 bears the Phosphothreonine mark. N6-acetyllysine; alternate occurs at positions 116 and 123. K116 and K123 each carry N6-glutaryllysine; alternate. K123 carries the N6-(2-hydroxyisobutyryl)lysine; alternate modification. The residue at position 123 (K123) is an N6-methylated lysine; alternate. N6-succinyllysine; alternate is present on K123.

This sequence belongs to the histone H3 family. In terms of assembly, the nucleosome is a histone octamer containing two molecules each of H2A, H2B, H3 and H4 assembled in one H3-H4 heterotetramer and two H2A-H2B heterodimers. The octamer wraps approximately 147 bp of DNA. In terms of processing, acetylation is generally linked to gene activation. Acetylation on Lys-19 (H3K18ac) and Lys-24 (H3K24ac) favors methylation at Arg-18 (H3R17me). Acetylation at Lys-123 (H3K122ac) by EP300/p300 plays a central role in chromatin structure: localizes at the surface of the histone octamer and stimulates transcription, possibly by promoting nucleosome instability. Asymmetric dimethylation at Arg-18 (H3R17me2a) is linked to gene activation. Asymmetric dimethylation at Arg-3 (H3R2me2a) by PRMT6 is linked to gene repression and is mutually exclusive with H3 Lys-5 methylation (H3K4me2 and H3K4me3). H3R2me2a is present at the 3' of genes regardless of their transcription state and is enriched on inactive promoters, while it is absent on active promoters. Post-translationally, methylation at Lys-5 (H3K4me) and Lys-80 (H3K79me) are linked to gene activation. Methylation at Lys-5 (H3K4me) facilitates subsequent acetylation of H3 and H4. Methylation at Lys-80 (H3K79me) is associated with DNA double-strand break (DSB) responses and is a specific target for TP53BP1. Methylation at Lys-10 (H3K9me) and Lys-28 (H3K27me) are linked to gene repression. Methylation at Lys-10 (H3K9me) is a specific target for HP1 proteins (CBX1, CBX3 and CBX5) and prevents subsequent phosphorylation at Ser-11 (H3S10ph) and acetylation of H3 and H4. Methylation at Lys-5 (H3K4me) and Lys-80 (H3K79me) require preliminary monoubiquitination of H2B at 'Lys-120'. In terms of processing, phosphorylated at Thr-4 (H3T3ph) by HASPIN during prophase and dephosphorylated during anaphase. Phosphorylation at Ser-11 (H3S10ph) by aurkb is crucial for chromosome condensation and cell-cycle progression during mitosis and meiosis. In addition phosphorylation at Ser-11 (H3S10ph) by rps6ka4 and rps6ka5 is important during interphase because it enables the transcription of genes following external stimulation, like mitogens, stress, growth factors or UV irradiation and result in the activation of genes, such as c-fos and c-jun. Phosphorylation at Ser-11 (H3S10ph), which is linked to gene activation, prevents methylation at Lys-10 (H3K9me) but facilitates acetylation of H3 and H4. Phosphorylation at Ser-11 (H3S10ph) by aurkb mediates the dissociation of HP1 proteins (cbx1, cbx3 and cbx5) from heterochromatin. Phosphorylation at Ser-11 (H3S10ph) is also an essential regulatory mechanism for neoplastic cell transformation. Phosphorylation at Thr-7 (H3T6ph) by prkcb is a specific tag for epigenetic transcriptional activation that prevents demethylation of Lys-5 (H3K4me) by lsd1/kdm1a. At centromeres, specifically phosphorylated at Thr-12 (H3T11ph) from prophase to early anaphase, by DAPK3 and PKN1. Phosphorylation at Thr-12 (H3T11ph) by PKN1 or isoform M2 of PKM (PKM2) is a specific tag for epigenetic transcriptional activation that promotes demethylation of Lys-10 (H3K9me) by kdm4c/jmjd2c. Phosphorylation at Tyr-42 (H3Y41ph) by jak2 promotes exclusion of cbx5 (HP1 alpha) from chromatin. Lysine deamination at Lys-5 (H3K4all) to form allysine only takes place on H3K4me3 and results in gene repression. Post-translationally, butyrylation of histones marks active promoters and competes with histone acetylation. It is present during late spermatogenesis. In terms of processing, succinylation at Lys-80 (H3K79succ) by KAT2A takes place with a maximum frequency around the transcription start sites of genes. It gives a specific tag for epigenetic transcription activation. Desuccinylation at Lys-123 (H3K122succ) by SIRT7 in response to DNA damage promotes chromatin condensation and double-strand breaks (DSBs) repair. Serine ADP-ribosylation constitutes the primary form of ADP-ribosylation of proteins in response to DNA damage. Serine ADP-ribosylation at Ser-11 (H3S10ADPr) is mutually exclusive with phosphorylation at Ser-11 (H3S10ph) and impairs acetylation at Lys-10 (H3K9ac).

The protein resides in the nucleus. It localises to the chromosome. Core component of nucleosome. Nucleosomes wrap and compact DNA into chromatin, limiting DNA accessibility to the cellular machineries which require DNA as a template. Histones thereby play a central role in transcription regulation, DNA repair, DNA replication and chromosomal stability. DNA accessibility is regulated via a complex set of post-translational modifications of histones, also called histone code, and nucleosome remodeling. This chain is Histone H3.3C (h3-5), found in Xenopus laevis (African clawed frog).